The following is a 147-amino-acid chain: Hemoglobin subunit epsilon (147 aa).

In terms of domain architecture, Globin spans 3–147 (HFTAEEKAAI…VAIALGHKYH (145 aa)). 2 positions are modified to phosphoserine: Ser14 and Ser51. Residues His64 and His93 each contribute to the heme b site.

It belongs to the globin family. As to quaternary structure, heterotetramer of two alpha chains and two epsilon chains in early embryonic hemoglobin Gower-2; two zeta chains and two epsilon chains in early embryonic hemoglobin Gower-1. As to expression, red blood cells.

Its function is as follows. The epsilon chain is a beta-type chain of early mammalian embryonic hemoglobin. This is Hemoglobin subunit epsilon (HBE1) from Callithrix jacchus (White-tufted-ear marmoset).